The chain runs to 446 residues: Cyclin-T1-1 (446 aa).

It belongs to the cyclin family. Cyclin T subfamily.

The protein is Cyclin-T1-1 (CYCT1-1) of Oryza sativa subsp. japonica (Rice).